The primary structure comprises 443 residues: L-ornithine N(5)-monooxygenase (443 aa).

FAD contacts are provided by residues 45–53 and Gln64; that span reads DKQGDYRWH. Lys69 serves as a coordination point for substrate. Val130 contacts FAD. NADP(+)-binding positions include 215–218 and Arg240; that span reads GGQS. Residues 254–257 and Asn284 each bind substrate; that span reads NEVF. 284–286 contributes to the NADP(+) binding site; it reads NYS. Position 407 to 409 (407 to 409) interacts with FAD; that stretch reads TLL. Ser410 contacts substrate.

Belongs to the lysine N(6)-hydroxylase/L-ornithine N(5)-oxygenase family. As to quaternary structure, homotetramer. FAD serves as cofactor.

Its subcellular location is the cell inner membrane. The catalysed reaction is L-ornithine + NADPH + O2 = N(5)-hydroxy-L-ornithine + NADP(+) + H2O. It participates in siderophore biosynthesis; pyoverdin biosynthesis. Functionally, catalyzes the conversion of L-ornithine to N(5)-hydroxyornithine, the first step in the biosynthesis of all hydroxamate-containing siderophores, such as pyoverdin. Pyoverdin is a hydroxamate siderophore composed of a 6,7-dihydroxyquinoline-containing fluorescent chromophore joined to the N-terminus of a partly cyclic octapeptide (D-Ser-L-Arg-D-Ser-L-N(5)-OH-Orn-L-Lys-L-N(5)-OH-Orn-L-Thr-L-Thr in strain PAO1). Specific for NADPH, which plays a role in stabilization of the C4a-hydroperoxyflavin intermediate. The polypeptide is L-ornithine N(5)-monooxygenase (Pseudomonas aeruginosa (strain ATCC 15692 / DSM 22644 / CIP 104116 / JCM 14847 / LMG 12228 / 1C / PRS 101 / PAO1)).